The sequence spans 648 residues: Golgin subfamily A member 8G (648 aa).

The span at 1 to 11 shows a compositional bias: pro residues; that stretch reads MWPQARLPPHP. Disordered stretches follow at residues 1 to 84 and 119 to 139; these read MWPQ…SATL and NKQV…KQKA. Polar residues predominate over residues 50-62; that stretch reads TNGSIHETATSGG. 3 coiled-coil regions span residues 105 to 160, 223 to 275, and 318 to 424; these read VSQL…LNTD, LEQS…MSQE, and EVEL…QQKQ. Over residues 121 to 139 the composition is skewed to basic and acidic residues; that stretch reads QVEHQLEEEKKANNEKQKA. 4 disordered regions span residues 356 to 376, 434 to 461, 508 to 549, and 600 to 624; these read LREQ…QEER, ALPG…SIPQ, PITK…GVAA, and PVQG…QDHQ. A compositionally biased stretch (basic and acidic residues) spans 441-453; the sequence is GGGHLDSEGEEAP. The segment covering 521 to 534 has biased composition (gly residues); the sequence is PGGGHHQAGPGQGG.

This sequence belongs to the GOLGA8 family.

The sequence is that of Golgin subfamily A member 8G from Homo sapiens (Human).